Reading from the N-terminus, the 341-residue chain is S-adenosylmethionine:tRNA ribosyltransferase-isomerase (341 aa).

It belongs to the QueA family. Monomer.

The protein localises to the cytoplasm. The enzyme catalyses 7-aminomethyl-7-carbaguanosine(34) in tRNA + S-adenosyl-L-methionine = epoxyqueuosine(34) in tRNA + adenine + L-methionine + 2 H(+). It participates in tRNA modification; tRNA-queuosine biosynthesis. Its function is as follows. Transfers and isomerizes the ribose moiety from AdoMet to the 7-aminomethyl group of 7-deazaguanine (preQ1-tRNA) to give epoxyqueuosine (oQ-tRNA). The chain is S-adenosylmethionine:tRNA ribosyltransferase-isomerase from Caldanaerobacter subterraneus subsp. tengcongensis (strain DSM 15242 / JCM 11007 / NBRC 100824 / MB4) (Thermoanaerobacter tengcongensis).